Here is a 96-residue protein sequence, read N- to C-terminus: Large ribosomal subunit protein uL23 (96 aa).

The protein belongs to the universal ribosomal protein uL23 family. As to quaternary structure, part of the 50S ribosomal subunit. Contacts protein L29, and trigger factor when it is bound to the ribosome.

Functionally, one of the early assembly proteins it binds 23S rRNA. One of the proteins that surrounds the polypeptide exit tunnel on the outside of the ribosome. Forms the main docking site for trigger factor binding to the ribosome. The sequence is that of Large ribosomal subunit protein uL23 from Bacillus cereus (strain ATCC 10987 / NRS 248).